Consider the following 445-residue polypeptide: RCC1 domain-containing protein RUG3, mitochondrial (445 aa).

Residues 1 to 22 constitute a mitochondrion transit peptide; sequence MAALSHRLRSFTRRFSSTRTTQ. 7 RCC1 repeats span residues 47 to 101, 118 to 169, 171 to 221, 222 to 279, 280 to 331, 333 to 383, and 385 to 442; these read TLQL…DSSS, DGDL…ALTH, GDVF…AITE, SGEL…ALTK, EGQL…ALTE, GKVL…AITD, and GELW…CLVS.

As to quaternary structure, interacts with ATM. Mostly expressed in roots and rosette leaves of young seedlings, and, to a lower extent, in the flowers and siliques of mature plants. Preferentially expressed in the vascular tissues.

It localises to the mitochondrion. Functionally, regulates DNA damage response (DDR) synergistically with ATM. Together with ATM, involved in the splicing of the ND2/NAD2 mRNA. Required for the accumulation of mitochondrial respiratory chain complex I. Negative regulator of plant responses to abscisic acid (ABA). May have a pivotal role in vegetative growth and the phase transition from vegetative to reproductive growth. This chain is RCC1 domain-containing protein RUG3, mitochondrial, found in Arabidopsis thaliana (Mouse-ear cress).